The sequence spans 368 residues: Flavanone 3-dioxygenase (368 aa).

Residues 191–295 (CVDMDQKVIV…RMSIATFQNP (105 aa)) form the Fe2OG dioxygenase domain. Fe cation contacts are provided by His-218, Asp-220, and His-276. Arg-286 is a binding site for 2-oxoglutarate.

It belongs to the iron/ascorbate-dependent oxidoreductase family. It depends on Fe(2+) as a cofactor. The cofactor is L-ascorbate.

The enzyme catalyses a (2S)-flavan-4-one + 2-oxoglutarate + O2 = a (2R,3R)-dihydroflavonol + succinate + CO2. It functions in the pathway secondary metabolite biosynthesis; flavonoid biosynthesis. Involved in the conversion of (2S)-naringenin to (+)-(2R/3R)-dihydrokaempferol. This chain is Flavanone 3-dioxygenase (FHT), found in Petroselinum crispum (Parsley).